The sequence spans 61 residues: MDPNCSCATDGSCSCSGSCKCKECKCTTCKKSCCSCCPVGCAKCSQGCVCKEASEKCSCCA.

Met1 is subject to N-acetylmethionine. Residues Met1–Cys29 are beta. A divalent metal cation-binding residues include Cys5, Cys7, Cys13, Cys15, Cys19, Cys21, Cys24, Cys26, Cys29, Cys33, Cys34, Cys36, Cys37, Cys41, Cys44, Cys48, Cys50, and Cys57. The interval Lys30–Ala61 is alpha. Ser58 carries the phosphoserine modification. Positions 59 and 60 each coordinate a divalent metal cation.

This sequence belongs to the metallothionein superfamily. Type 1 family.

In terms of biological role, metallothioneins have a high content of cysteine residues that bind various heavy metals; these proteins are transcriptionally regulated by both heavy metals and glucocorticoids. The sequence is that of Metallothionein-2 (MT2) from Mesocricetus auratus (Golden hamster).